Consider the following 124-residue polypeptide: Biogenesis of lysosome-related organelles complex 1 subunit CNL1 (124 aa).

Residues 1–20 (MMSENITAVEPQENNDVEAD) are disordered. Positions 75-98 (IGMAKDLLQKCDDLEKHYDQLDAV) form a coiled coil.

It belongs to the BLOC1S4 family. As to quaternary structure, component of the biogenesis of lysosome-related organelles complex-1 (BLOC-1).

Its subcellular location is the cytoplasm. Component of the biogenesis of lysosome-related organelles complex-1 (BLOC-1), a complex that is involved in endosomal cargo sorting. In Kluyveromyces lactis (strain ATCC 8585 / CBS 2359 / DSM 70799 / NBRC 1267 / NRRL Y-1140 / WM37) (Yeast), this protein is Biogenesis of lysosome-related organelles complex 1 subunit CNL1 (CLN1).